We begin with the raw amino-acid sequence, 446 residues long: Transcription factor Dp-2 (446 aa).

Residue threonine 2 is modified to N-acetylthreonine. At serine 24 the chain carries Phosphoserine. An interaction with CEBPA region spans residues 60–82 (PQMIISTPQRLTSSGSVLIGSPY). The Nuclear localization signal signature appears at 103-118 (GDRKRARKFIDSDFSE). Serine 122 is modified (phosphoserine). Residues 129–210 (GKGLRHFSMK…KKEIKWIGLP (82 aa)) mediate DNA binding. The DEF box motif lies at 176 to 210 (DQKNIRRRVYDALNVLMAMNIISKEKKEIKWIGLP). The segment at 219–292 (NLEIEKQRRI…RKTVIDCSIS (74 aa)) is dimerization. A DCB1 region spans residues 229–261 (ERIKQKRAQLQELLLQQIAFKNLVQRNRQNEQQ). Positions 274–330 (LPFIIINTSRKTVIDCSISSDKFEYLFNFDNTFEIHDDIEVLKRMGMSFGLESGKCS) are DCB2. Residues 409–419 (SHQSSSAASHC) are compositionally biased toward low complexity. The tract at residues 409-446 (SHQSSSAASHCSESRGETPCSFNDEDEEDDEEDSSSPE) is disordered. The span at 431 to 446 (NDEDEEDDEEDSSSPE) shows a compositional bias: acidic residues.

This sequence belongs to the E2F/DP family. Component of the DRTF1/E2F transcription factor complex. Forms heterodimers with E2F family members. The complex can interact with hypophosphorylated retinoblastoma protein RB1 and related proteins (RBL1 and RBL2) that inhibit the E2F transactivation domain. During the cell cycle, RB becomes phosphorylated in mid-to-late G1 phase, detaches from the DRTF1/E2F complex rendering E2F transcriptionally active. Viral oncoproteins, notably E1A, T-antigen and HPV E7, are capable of sequestering RB protein, thus releasing the active complex. Interacts with GMCL. Component of the DREAM complex (also named LINC complex) at least composed of E2F4, E2F5, LIN9, LIN37, LIN52, LIN54, MYBL1, MYBL2, RBL1, RBL2, RBBP4, TFDP1 and TFDP2. The complex exists in quiescent cells where it represses cell cycle-dependent genes. It dissociates in S phase when LIN9, LIN37, LIN52 and LIN54 form a subcomplex that binds to MYBL2. The complex TFDP2:E2F1 interacts with CEBPA; the interaction prevents CEBPA binding to target genes promoters and represses its transcriptional activity. Ser-24 is probably phosphorylated by CDK2. In terms of tissue distribution, high levels in heart and skeletal muscle. Also found in placenta, kidney, brain, lung and liver. The presence as well as the abundance of the different transcripts appear to vary significantly in different tissues and cell lines.

It localises to the nucleus. Functionally, can stimulate E2F-dependent transcription. Binds DNA cooperatively with E2F family members through the E2 recognition site, 5'-TTTC[CG]CGC-3', found in the promoter region of a number of genes whose products are involved in cell cycle regulation or in DNA replication. The TFDP2:E2F complex functions in the control of cell-cycle progression from G1 to S phase. The E2F1:DP complex appears to mediate both cell proliferation and apoptosis. Blocks adipocyte differentiation by repressing CEBPA binding to its target gene promoters. This is Transcription factor Dp-2 (TFDP2) from Homo sapiens (Human).